The chain runs to 635 residues: Protein MICRORCHIDIA 1 (635 aa).

Residues 491-511 (RTVIPDQPPTVNTYNPSPLPS) are disordered. Residues 588-635 (MRCEEYVKKENEVEQTVKSLEKELEEIKSKCAQLALLVDAKKKEMQQV) adopt a coiled-coil conformation.

This sequence belongs to the MORC ATPase protein family. Homodimer and heterodimer with MORC6. Component of an RNA-directed DNA methylation (RdDM) complex that contains at least MORC6, MORC1/CRT1, MORC2, SWI3D and SUVH9. Binds directly to SUVH2 and SUVH9. Interacts with the resistance proteins RCY1, RPM1, SNC1, RPP8, SSI4 and RPS2. The interactions with various resistance proteins are disrupted when these resistance proteins are activated. Interacts with the PAMP recognition receptor FLS2. Requires Mg(2+) as cofactor. Mn(2+) serves as cofactor. Expressed constitutively.

It localises to the nucleus. The protein localises to the endosome. Its function is as follows. Mediator of defense signaling triggered by distinct classes of R proteins. Required during hypersensitive response (HR) that confers disease resistance to turnip crinkle virus (TCV). Exhibits ATPase activity. Contributes to resistance against Pseudomonas syringae and Hyaloperonospora arabidopsidis, at early stages prior to cytosolic calcium ions Ca(2+) accumulation. Required for pathogen-associated molecular pattern (PAMP)-triggered immunity (PTI), basal resistance, non-host resistance and systemic acquired resistance (SAR). Binds DNA/RNA in a non-specific manner and exhibits endonuclease activity. Probably involved in DNA repair. Required for both RPP8- and SSI4-mediated resistance responses, thus being involved in both TIR- and CC-NB-LRR pathways. Involved in RNA-directed DNA methylation (RdDM) as a component of the RdDM machinery and required for gene silencing. May also be involved in the regulation of chromatin architecture to maintain gene silencing. This Arabidopsis thaliana (Mouse-ear cress) protein is Protein MICRORCHIDIA 1.